The following is a 178-amino-acid chain: Large ribosomal subunit protein uL6 (178 aa).

This sequence belongs to the universal ribosomal protein uL6 family. In terms of assembly, part of the 50S ribosomal subunit.

Its function is as follows. This protein binds to the 23S rRNA, and is important in its secondary structure. It is located near the subunit interface in the base of the L7/L12 stalk, and near the tRNA binding site of the peptidyltransferase center. In Limosilactobacillus fermentum (strain NBRC 3956 / LMG 18251) (Lactobacillus fermentum), this protein is Large ribosomal subunit protein uL6.